Consider the following 252-residue polypeptide: Glycine-rich cell wall structural protein 1.0 (252 aa).

The N-terminal stretch at 1 to 30 (MATSKVLLSNVLFVFVCFGICSAARTLLTL) is a signal peptide. The disordered stretch occupies residues 231–252 (GSGYGGGGGSGEGGGHGGGYYP).

As to expression, expressed in young hypocotyls.

It is found in the secreted. It localises to the cell wall. Its function is as follows. Responsible for plasticity of the cell wall. In Phaseolus vulgaris (Kidney bean), this protein is Glycine-rich cell wall structural protein 1.0.